Consider the following 155-residue polypeptide: Interferon gamma (155 aa).

The signal sequence occupies residues 1-22 (MNATHCILALQLFLMAVSGCYC). Asparagine 38 and asparagine 90 each carry an N-linked (GlcNAc...) asparagine glycan.

Belongs to the type II (or gamma) interferon family. Homodimer. Interacts with IFNGR1 (via extracellular domain); this interaction promotes IFNGR1 dimerization. As to expression, released primarily from activated T lymphocytes.

The protein localises to the secreted. Its function is as follows. Type II interferon produced by immune cells such as T-cells and NK cells that plays crucial roles in antimicrobial, antiviral, and antitumor responses by activating effector immune cells and enhancing antigen presentation. Primarily signals through the JAK-STAT pathway after interaction with its receptor IFNGR1 to affect gene regulation. Upon IFNG binding, IFNGR1 intracellular domain opens out to allow association of downstream signaling components JAK2, JAK1 and STAT1, leading to STAT1 activation, nuclear translocation and transcription of IFNG-regulated genes. Many of the induced genes are transcription factors such as IRF1 that are able to further drive regulation of a next wave of transcription. Plays a role in class I antigen presentation pathway by inducing a replacement of catalytic proteasome subunits with immunoproteasome subunits. In turn, increases the quantity, quality, and repertoire of peptides for class I MHC loading. Increases the efficiency of peptide generation also by inducing the expression of activator PA28 that associates with the proteasome and alters its proteolytic cleavage preference. Up-regulates as well MHC II complexes on the cell surface by promoting expression of several key molecules such as cathepsins B/CTSB, H/CTSH, and L/CTSL. Participates in the regulation of hematopoietic stem cells during development and under homeostatic conditions by affecting their development, quiescence, and differentiation. In Mus musculus (Mouse), this protein is Interferon gamma (Ifng).